The sequence spans 339 residues: Phenylalanine--tRNA ligase alpha subunit (339 aa).

E254 serves as a coordination point for Mg(2+).

It belongs to the class-II aminoacyl-tRNA synthetase family. Phe-tRNA synthetase alpha subunit type 1 subfamily. In terms of assembly, tetramer of two alpha and two beta subunits. Mg(2+) is required as a cofactor.

The protein localises to the cytoplasm. The enzyme catalyses tRNA(Phe) + L-phenylalanine + ATP = L-phenylalanyl-tRNA(Phe) + AMP + diphosphate + H(+). The chain is Phenylalanine--tRNA ligase alpha subunit from Lachnoclostridium phytofermentans (strain ATCC 700394 / DSM 18823 / ISDg) (Clostridium phytofermentans).